The primary structure comprises 759 residues: Tripartite motif-containing protein 46 (759 aa).

The tract at residues 1 to 166 (MAEGEDMQTF…VERYRQSVSV (166 aa)) is required for proximal axon localization, axon formation and migration. Residues 33–59 (CPVCQEMYKQPLVLPCTHNVCQACARE) form an RING-type 1; degenerate zinc finger. Residues 67 to 98 (IGHGGDPSSEPTSPASTPSTRSPRLSRRTLPK) are disordered. The segment covering 73-89 (PSSEPTSPASTPSTRSP) has biased composition (low complexity). The segment at 172-231 (CQLCKPPPLEATKGCSECRATFCNECFKLFHPWGTQKAQHEPTLPTLSFRPKGLMCPDHK) adopts an RING-type 2; degenerate zinc-finger fold. The B box-type zinc finger occupies 222 to 263 (PKGLMCPDHKEEVTHYCKTCQRLVCQLCRVRRTHSGHKITPV). Cys227, His230, Cys249, and His255 together coordinate Zn(2+). A coiled-coil region spans residues 294-400 (ELEETIRHTE…RATEALQTFR (107 aa)). Ser330 is subject to Phosphoserine. One can recognise a COS domain in the interval 370-427 (LKETDQPCFVQAAKQLHNRIARATEALQTFRPAASSSFRHCQLDVGREMKLLTELNFL). Residues 411–429 (QLDVGREMKLLTELNFLRV) form a required for microtubule association, proximal axon localization and axon formation region. The Fibronectin type-III domain occupies 429-528 (VPEAPVIDTQ…EDVHLHTPPA (100 aa)). The B30.2/SPRY domain maps to 513 to 747 (GYGEYSEDVH…LQEPVGTKPE (235 aa)). At Ser627 the chain carries Phosphoserine.

It belongs to the TRIM/RBCC family. In terms of assembly, interacts with TUBB3 and TUBA4A. Expressed in primary hippocampal and cortical neurons.

The protein localises to the cell projection. It localises to the axon. It is found in the cytoplasm. The protein resides in the cytoskeleton. Its function is as follows. Microtubule-associated protein that is involved in the formation of parallel microtubule bundles linked by cross-bridges in the proximal axon. Required for the uniform orientation and maintenance of the parallel microtubule fascicles, which are important for efficient cargo delivery and trafficking in axons. Thereby also required for proper axon specification, the establishment of neuronal polarity and proper neuronal migration. The protein is Tripartite motif-containing protein 46 of Rattus norvegicus (Rat).